We begin with the raw amino-acid sequence, 284 residues long: Putative xyloglucan endotransglucosylase/hydrolase protein 13 (284 aa).

The signal sequence occupies residues 1–24; that stretch reads MAAFTTKQSLLLLSLLLLISLSAG. Residues 25-214 enclose the GH16 domain; it reads SFYDNFDITW…WTNAPFSASY (190 aa). The Nucleophile role is filled by Glu-100. Catalysis depends on Glu-104, which acts as the Proton donor. Glu-104 lines the xyloglucan pocket. Asn-108 is a glycosylation site (N-linked (GlcNAc...) asparagine). Residues 117–119, 127–129, 193–194, and Gly-198 each bind xyloglucan; these read HTN, NRE, and DW. 2 disulfides stabilise this stretch: Cys-223-Cys-234 and Cys-267-Cys-281. Arg-272 is a xyloglucan binding site.

It belongs to the glycosyl hydrolase 16 family. XTH group 2 subfamily. Post-translationally, contains at least one intrachain disulfide bond essential for its enzymatic activity.

It localises to the secreted. The protein resides in the cell wall. Its subcellular location is the extracellular space. The protein localises to the apoplast. The catalysed reaction is breaks a beta-(1-&gt;4) bond in the backbone of a xyloglucan and transfers the xyloglucanyl segment on to O-4 of the non-reducing terminal glucose residue of an acceptor, which can be a xyloglucan or an oligosaccharide of xyloglucan.. Functionally, may catalyze xyloglucan endohydrolysis (XEH) and/or endotransglycosylation (XET). Cleaves and religates xyloglucan polymers, an essential constituent of the primary cell wall, and thereby participates in cell wall construction of growing tissues. This Arabidopsis thaliana (Mouse-ear cress) protein is Putative xyloglucan endotransglucosylase/hydrolase protein 13 (XTH13).